The primary structure comprises 36 residues: Peptide POLARIS (36 aa).

Belongs to the POLARIS peptide family. Mostly expressed in the embryonic root from the heart stage and in the seedling primary and lateral root tips, especially in the columella initials and lateral root cap. Also detectable in aerial parts of the seedling, sepals and leaves, principally in vascular tissues of the lamina and petiole.

Functionally, required for correct root growth and vascular development, probably by modulating both cell division rate in meristems and cell elongation in roots. Negative regulator of the ethylene signaling pathway that modulates microtubule cytoskeleton dynamics and auxin transport and homeostasis, and possibly cytokinin signaling, thus influencing root growth and lateral root development. The protein is Peptide POLARIS (PLS) of Arabidopsis thaliana (Mouse-ear cress).